The following is a 120-amino-acid chain: Large ribosomal subunit protein bL19 (120 aa).

Belongs to the bacterial ribosomal protein bL19 family.

In terms of biological role, this protein is located at the 30S-50S ribosomal subunit interface and may play a role in the structure and function of the aminoacyl-tRNA binding site. In Trichormus variabilis (strain ATCC 29413 / PCC 7937) (Anabaena variabilis), this protein is Large ribosomal subunit protein bL19.